The chain runs to 521 residues: Medium/long-chain-fatty-acid--[acyl-carrier-protein] ligase MbtM (521 aa).

The segment at 146-172 is disordered; sequence RRCPEPPAPHANPAILQGTAGSTGTPK.

This sequence belongs to the ATP-dependent AMP-binding enzyme family.

It carries out the reaction a long-chain fatty acid + holo-[ACP] + ATP = a long-chain fatty acyl-[ACP] + AMP + diphosphate. It catalyses the reaction a medium-chain fatty acid + holo-[ACP] + ATP = a medium-chain fatty acyl-[ACP] + AMP + diphosphate. It participates in siderophore biosynthesis; mycobactin biosynthesis. Functionally, activates lipidic moieties required for mycobactin biosynthesis. Converts medium- to long-chain aliphatic fatty acids into acyl adenylate, which is further transferred on to the phosphopantetheine arm of the carrier protein MbtL. This chain is Medium/long-chain-fatty-acid--[acyl-carrier-protein] ligase MbtM (mbtM), found in Mycolicibacterium paratuberculosis (strain ATCC BAA-968 / K-10) (Mycobacterium paratuberculosis).